The following is a 104-amino-acid chain: Co-chaperonin GroES 3 (104 aa).

It belongs to the GroES chaperonin family. As to quaternary structure, heptamer of 7 subunits arranged in a ring. Interacts with the chaperonin GroEL.

The protein localises to the cytoplasm. Its function is as follows. Together with the chaperonin GroEL, plays an essential role in assisting protein folding. The GroEL-GroES system forms a nano-cage that allows encapsulation of the non-native substrate proteins and provides a physical environment optimized to promote and accelerate protein folding. GroES binds to the apical surface of the GroEL ring, thereby capping the opening of the GroEL channel. This chain is Co-chaperonin GroES 3, found in Bradyrhizobium diazoefficiens (strain JCM 10833 / BCRC 13528 / IAM 13628 / NBRC 14792 / USDA 110).